Reading from the N-terminus, the 484-residue chain is tRNA sulfurtransferase (484 aa).

The THUMP domain occupies 63-167 (REMIERLTCT…LDRLFVIHRQ (105 aa)). Residues 185–186 (LM), K267, G289, and Q298 each bind ATP. A disulfide bond links C346 and C457. Residues 405-483 (VLPGQIVIDI…GHTNVRVYRP (79 aa)) form the Rhodanese domain. Residue C457 is the Cysteine persulfide intermediate of the active site.

It belongs to the ThiI family.

It is found in the cytoplasm. It carries out the reaction [ThiI sulfur-carrier protein]-S-sulfanyl-L-cysteine + a uridine in tRNA + 2 reduced [2Fe-2S]-[ferredoxin] + ATP + H(+) = [ThiI sulfur-carrier protein]-L-cysteine + a 4-thiouridine in tRNA + 2 oxidized [2Fe-2S]-[ferredoxin] + AMP + diphosphate. The catalysed reaction is [ThiS sulfur-carrier protein]-C-terminal Gly-Gly-AMP + S-sulfanyl-L-cysteinyl-[cysteine desulfurase] + AH2 = [ThiS sulfur-carrier protein]-C-terminal-Gly-aminoethanethioate + L-cysteinyl-[cysteine desulfurase] + A + AMP + 2 H(+). It participates in cofactor biosynthesis; thiamine diphosphate biosynthesis. Its function is as follows. Catalyzes the ATP-dependent transfer of a sulfur to tRNA to produce 4-thiouridine in position 8 of tRNAs, which functions as a near-UV photosensor. Also catalyzes the transfer of sulfur to the sulfur carrier protein ThiS, forming ThiS-thiocarboxylate. This is a step in the synthesis of thiazole, in the thiamine biosynthesis pathway. The sulfur is donated as persulfide by IscS. The polypeptide is tRNA sulfurtransferase (Pseudomonas paraeruginosa (strain DSM 24068 / PA7) (Pseudomonas aeruginosa (strain PA7))).